Consider the following 244-residue polypeptide: tRNA pseudouridine synthase A (244 aa).

The active-site Nucleophile is aspartate 52. Substrate is bound at residue tyrosine 110.

It belongs to the tRNA pseudouridine synthase TruA family. In terms of assembly, homodimer.

It catalyses the reaction uridine(38/39/40) in tRNA = pseudouridine(38/39/40) in tRNA. In terms of biological role, formation of pseudouridine at positions 38, 39 and 40 in the anticodon stem and loop of transfer RNAs. The sequence is that of tRNA pseudouridine synthase A from Brevibacillus brevis (strain 47 / JCM 6285 / NBRC 100599).